A 188-amino-acid polypeptide reads, in one-letter code: Ion-translocating oxidoreductase complex subunit B (188 aa).

The segment at 1–26 (MMSLWIAIGALSTLALVSGVVLGFAA) is hydrophobic. Residues 32–91 (DEDPVVEQVDAILPQSQCGQCGYPGCRPYAEAVSTGGEKINKCAPGGEQVMLKLAELLAV) form the 4Fe-4S domain. [4Fe-4S] cluster contacts are provided by cysteine 49, cysteine 52, cysteine 57, cysteine 74, cysteine 117, cysteine 120, cysteine 123, cysteine 127, cysteine 147, cysteine 150, cysteine 153, and cysteine 157. 2 4Fe-4S ferredoxin-type domains span residues 108–137 (KVAF…GATR) and 138–167 (AMHT…MIPV).

This sequence belongs to the 4Fe4S bacterial-type ferredoxin family. RnfB subfamily. As to quaternary structure, the complex is composed of six subunits: RnfA, RnfB, RnfC, RnfD, RnfE and RnfG. It depends on [4Fe-4S] cluster as a cofactor.

The protein resides in the cell inner membrane. In terms of biological role, part of a membrane-bound complex that couples electron transfer with translocation of ions across the membrane. In Yersinia pestis bv. Antiqua (strain Antiqua), this protein is Ion-translocating oxidoreductase complex subunit B.